The chain runs to 332 residues: D-alanine--D-alanine ligase (332 aa).

The ATP-grasp domain occupies 112 to 312 (KRIWRADGLP…YPDLCLRILA (201 aa)). 138–193 (FQELGAPMIVKPSREGSTIGLTKVTSLGQCEQAYRLAAQHDPEVLCEQFIDGDETT) lines the ATP pocket. Positions 265, 279, and 281 each coordinate Mg(2+).

This sequence belongs to the D-alanine--D-alanine ligase family. It depends on Mg(2+) as a cofactor. Requires Mn(2+) as cofactor.

It localises to the cytoplasm. It catalyses the reaction 2 D-alanine + ATP = D-alanyl-D-alanine + ADP + phosphate + H(+). It participates in cell wall biogenesis; peptidoglycan biosynthesis. In terms of biological role, cell wall formation. This Acidovorax ebreus (strain TPSY) (Diaphorobacter sp. (strain TPSY)) protein is D-alanine--D-alanine ligase.